The sequence spans 353 residues: DNA polymerase IV (353 aa).

Residues Ile-6–Gly-187 form the UmuC domain. Residues Asp-10 and Asp-105 each coordinate Mg(2+). The active site involves Glu-106.

This sequence belongs to the DNA polymerase type-Y family. As to quaternary structure, monomer. Requires Mg(2+) as cofactor.

The protein resides in the cytoplasm. The enzyme catalyses DNA(n) + a 2'-deoxyribonucleoside 5'-triphosphate = DNA(n+1) + diphosphate. Functionally, poorly processive, error-prone DNA polymerase involved in untargeted mutagenesis. Copies undamaged DNA at stalled replication forks, which arise in vivo from mismatched or misaligned primer ends. These misaligned primers can be extended by PolIV. Exhibits no 3'-5' exonuclease (proofreading) activity. May be involved in translesional synthesis, in conjunction with the beta clamp from PolIII. The polypeptide is DNA polymerase IV (Pseudomonas syringae pv. tomato (strain ATCC BAA-871 / DC3000)).